We begin with the raw amino-acid sequence, 332 residues long: Holliday junction branch migration complex subunit RuvB (332 aa).

The segment at 1-181 (MTRFLDSDAM…FGITGHMEYY (181 aa)) is large ATPase domain (RuvB-L). ATP contacts are provided by residues Leu20, Arg21, Gly62, Lys65, Thr66, Thr67, 128 to 130 (EDF), Arg171, Tyr181, and Arg218. Mg(2+) is bound at residue Thr66. The small ATPAse domain (RuvB-S) stretch occupies residues 182–252 (EENDLTEIIE…ITDKALTMLD (71 aa)). A head domain (RuvB-H) region spans residues 255 to 332 (HEGLDYVDQK…EHLGYQRFDK (78 aa)). Arg291, Arg310, Arg312, and Arg315 together coordinate DNA.

The protein belongs to the RuvB family. In terms of assembly, homohexamer. Forms an RuvA(8)-RuvB(12)-Holliday junction (HJ) complex. HJ DNA is sandwiched between 2 RuvA tetramers; dsDNA enters through RuvA and exits via RuvB. An RuvB hexamer assembles on each DNA strand where it exits the tetramer. Each RuvB hexamer is contacted by two RuvA subunits (via domain III) on 2 adjacent RuvB subunits; this complex drives branch migration. In the full resolvosome a probable DNA-RuvA(4)-RuvB(12)-RuvC(2) complex forms which resolves the HJ.

Its subcellular location is the cytoplasm. It catalyses the reaction ATP + H2O = ADP + phosphate + H(+). The RuvA-RuvB-RuvC complex processes Holliday junction (HJ) DNA during genetic recombination and DNA repair, while the RuvA-RuvB complex plays an important role in the rescue of blocked DNA replication forks via replication fork reversal (RFR). RuvA specifically binds to HJ cruciform DNA, conferring on it an open structure. The RuvB hexamer acts as an ATP-dependent pump, pulling dsDNA into and through the RuvAB complex. RuvB forms 2 homohexamers on either side of HJ DNA bound by 1 or 2 RuvA tetramers; 4 subunits per hexamer contact DNA at a time. Coordinated motions by a converter formed by DNA-disengaged RuvB subunits stimulates ATP hydrolysis and nucleotide exchange. Immobilization of the converter enables RuvB to convert the ATP-contained energy into a lever motion, pulling 2 nucleotides of DNA out of the RuvA tetramer per ATP hydrolyzed, thus driving DNA branch migration. The RuvB motors rotate together with the DNA substrate, which together with the progressing nucleotide cycle form the mechanistic basis for DNA recombination by continuous HJ branch migration. Branch migration allows RuvC to scan DNA until it finds its consensus sequence, where it cleaves and resolves cruciform DNA. This chain is Holliday junction branch migration complex subunit RuvB, found in Streptococcus agalactiae serotype Ia (strain ATCC 27591 / A909 / CDC SS700).